The primary structure comprises 837 residues: MSLSHLYRDGEGRVDDDDDERENFEITDWDLQNEFNPNRQRHWQTKEEATYGVWAEHDSDDERPSFGGKRPRDYSAPVNFISAGLKKGAAEEAELDDSEDEEKPGKQEELPKDLGPKKLKTGGNFKPSQKGFAGGTKSFMDFGSWERHTKGIGQKLLQKMGYVPGRGLGKNAQGIINPIEAKQRKGKGAVGAYGSERTTQSLQDFPVVDSEEEAEEEFQKELSQWRKDPSGSKKKPKYSYKTVEELKAKGRVSKKLSAPQKEISQVKVIDMTGREQKVYYSYSQISHKHSVPDEGLPLQAQPPPVPGKEAKAPGFALPELEHNLQLLIELTEQEIIQNDRQLQYERDMVVNLSHELDKMAEVLEHEERAIANLSKVLELVEQCARRLQPACSNPLTLDECARVFQTLQDKYYEEYRMSDRVDLAVAIVYPLMKDYFKDWDSLKDCRYGTEIISKWKSLLENDQLLSHGGQDLLADAFHRLMWEVWMPFVRNIVTQWQPRNCDPMVDFLDSWVHIIPVWVLDNILDQLIFPKLQKEVENWNPLTDTVPIHSWIHPWLPLMQARLEPLYSPIRSKLSSALQKWHPSDSSAKLILQPWKDVFTPGSWEAFMVKNIVPKLGMCLGELVINPHQQHMDAFYWVIDWEGMISVSSLVGLLEKHFFPKWLQVLCSWLSNSPNYEEITKWYLGWKSMFSDQVLAHPSVKDKFNEALDIMNRAVSSNVGAYMQPGARENIAYLTHTERRKDFQYEAMQERREAENMAQRGIGAAASSVPMNFKDLIETKAEEHNIVFMPVIGKRHEGKQLYTFGRIVIYIDRGVVFVQGEKTWVPTSLQSLIDMAK.

Basic and acidic residues-rich tracts occupy residues 1–13 and 50–64; these read MSLS…GEGR and TYGV…DERP. Disordered stretches follow at residues 1 to 21 and 50 to 136; these read MSLS…DDER and TYGV…AGGT. Residues 1 to 50 are required for interaction with DHX15; it reads MSLSHLYRDGEGRVDDDDDERENFEITDWDLQNEFNPNRQRHWQTKEEAT. A phosphoserine mark is found at serine 2, serine 59, and serine 98. The segment covering 91–102 has biased composition (acidic residues); the sequence is EEAELDDSEDEE. The segment covering 103–116 has biased composition (basic and acidic residues); that stretch reads KPGKQEELPKDLGP. The residue at position 144 (serine 144) is a Phosphoserine. The G-patch domain occupies 149–195; sequence TKGIGQKLLQKMGYVPGRGLGKNAQGIINPIEAKQRKGKGAVGAYGS. A disordered region spans residues 183-236; sequence QRKGKGAVGAYGSERTTQSLQDFPVVDSEEEAEEEFQKELSQWRKDPSGSKKKP. Serine 210 is modified (phosphoserine). Residues 217–231 show a composition bias toward basic and acidic residues; sequence EFQKELSQWRKDPSG. The short motif at 700-705 is the Nuclear localization signal element; it reads VKDKFN. A required for nuclear speckle localization region spans residues 710–734; that stretch reads IMNRAVSSNVGAYMQPGARENIAYL.

Belongs to the TFP11/STIP family. As to quaternary structure, identified in the spliceosome C complex. Found in the Intron Large (IL) complex, a post-mRNA release spliceosomal complex containing the excised intron, U2, U5 and U6 snRNPs, and splicing factors. Interacts with TUFT1. Interacts with DHX15; indicative for a recruitment of DHX15 to the IL complex. Interacts with GCFC2.

It localises to the cytoplasm. Its subcellular location is the nucleus. In terms of biological role, involved in pre-mRNA splicing, specifically in spliceosome disassembly during late-stage splicing events. Intron turnover seems to proceed through reactions in two lariat-intron associated complexes termed Intron Large (IL) and Intron Small (IS). In cooperation with DHX15 seems to mediate the transition of the U2, U5 and U6 snRNP-containing IL complex to the snRNP-free IS complex leading to efficient debranching and turnover of excised introns. May play a role in the differentiation of ameloblasts and odontoblasts or in the forming of the enamel extracellular matrix. The protein is Tuftelin-interacting protein 11 (TFIP11) of Oryctolagus cuniculus (Rabbit).